We begin with the raw amino-acid sequence, 248 residues long: Ribosomal RNA small subunit methyltransferase G (248 aa).

Residues G85, F90, 108 to 110, 137 to 138, and R156 contribute to the S-adenosyl-L-methionine site; these read DSS and AE.

This sequence belongs to the methyltransferase superfamily. RNA methyltransferase RsmG family.

It localises to the cytoplasm. In terms of biological role, specifically methylates the N7 position of a guanine in 16S rRNA. The polypeptide is Ribosomal RNA small subunit methyltransferase G (Prochlorococcus marinus (strain NATL2A)).